The following is a 206-amino-acid chain: Large ribosomal subunit protein uL4 (206 aa).

This sequence belongs to the universal ribosomal protein uL4 family. Part of the 50S ribosomal subunit.

In terms of biological role, one of the primary rRNA binding proteins, this protein initially binds near the 5'-end of the 23S rRNA. It is important during the early stages of 50S assembly. It makes multiple contacts with different domains of the 23S rRNA in the assembled 50S subunit and ribosome. Its function is as follows. Forms part of the polypeptide exit tunnel. This is Large ribosomal subunit protein uL4 from Bradyrhizobium sp. (strain ORS 278).